The primary structure comprises 119 residues: Ribonuclease P protein component (119 aa).

Belongs to the RnpA family. In terms of assembly, consists of a catalytic RNA component (M1 or rnpB) and a protein subunit.

The catalysed reaction is Endonucleolytic cleavage of RNA, removing 5'-extranucleotides from tRNA precursor.. RNaseP catalyzes the removal of the 5'-leader sequence from pre-tRNA to produce the mature 5'-terminus. It can also cleave other RNA substrates such as 4.5S RNA. The protein component plays an auxiliary but essential role in vivo by binding to the 5'-leader sequence and broadening the substrate specificity of the ribozyme. In Listeria monocytogenes serotype 4a (strain HCC23), this protein is Ribonuclease P protein component.